The sequence spans 874 residues: Alanine--tRNA ligase (874 aa).

The Zn(2+) site is built by His-564, His-568, Cys-665, and His-669.

Belongs to the class-II aminoacyl-tRNA synthetase family. The cofactor is Zn(2+).

The protein resides in the cytoplasm. The catalysed reaction is tRNA(Ala) + L-alanine + ATP = L-alanyl-tRNA(Ala) + AMP + diphosphate. In terms of biological role, catalyzes the attachment of alanine to tRNA(Ala) in a two-step reaction: alanine is first activated by ATP to form Ala-AMP and then transferred to the acceptor end of tRNA(Ala). Also edits incorrectly charged Ser-tRNA(Ala) and Gly-tRNA(Ala) via its editing domain. In Burkholderia pseudomallei (strain 1106a), this protein is Alanine--tRNA ligase.